We begin with the raw amino-acid sequence, 159 residues long: Succinate dehydrogenase [ubiquinone] cytochrome b small subunit, mitochondrial (159 aa).

The transit peptide at 1–56 (MAVLWRLSAVCGAQGGRALLLRTPVVRPAHISAFLQDRPIPEWCGVQHIHLSPGHH) directs the protein to the mitochondrion. Residues 57-63 (SGSKAAS) are Mitochondrial matrix-facing. A helical transmembrane segment spans residues 64-85 (LHWTSERVVSVLLLGLLPAAYL). The Mitochondrial intermembrane portion of the chain corresponds to 86-90 (NPCSA). A helical transmembrane segment spans residues 91–111 (MDYSLAATLTLHGHWGLGQVV). A heme b-binding site is contributed by histidine 102. Residues 112–120 (TDYVHGDAS) are Mitochondrial matrix-facing. Tyrosine 114 lines the a ubiquinone pocket. A helical transmembrane segment spans residues 121 to 142 (QKAAKAGLLALSALTFAGLCYF). The Mitochondrial intermembrane segment spans residues 143-159 (NYHDVGICKAVAMLWKL).

This sequence belongs to the CybS family. In terms of assembly, component of complex II composed of four subunits: the flavoprotein (FP) SDHA, iron-sulfur protein (IP) SDHB, and a cytochrome b560 composed of SDHC and SDHD.

Its subcellular location is the mitochondrion inner membrane. Its pathway is carbohydrate metabolism; tricarboxylic acid cycle. In terms of biological role, membrane-anchoring subunit of succinate dehydrogenase (SDH) that is involved in complex II of the mitochondrial electron transport chain and is responsible for transferring electrons from succinate to ubiquinone (coenzyme Q). SDH also oxidizes malate to the non-canonical enol form of oxaloacetate, enol-oxaloacetate. Enol-oxaloacetate, which is a potent inhibitor of the succinate dehydrogenase activity, is further isomerized into keto-oxaloacetate. In Pongo abelii (Sumatran orangutan), this protein is Succinate dehydrogenase [ubiquinone] cytochrome b small subunit, mitochondrial (SDHD).